Consider the following 224-residue polypeptide: MENLKKQVGIKAAEFVKSGMVVGLGTGSTAAYFVEELGRRVAEEQLEITGVTTSSVTSEQAKALGIPLASIDEVDYVDLTVDGADEIDSHLNGIKGGGAALLMEKIVATYSKDYIWIVDESKLSENLGSFKVPVEVIRYGSEQLFKEFERAAYAPTWRLNEEGEKLITDMQHFIIDLHIAKIENPQKLADELDLMVGVVEHGLFNDMVKKVIVAGSDGVKIISQ.

Residues 26–29, 82–85, and 95–98 contribute to the substrate site; these read TGST, DGAD, and KGGG. The Proton acceptor role is filled by Glu-104. Residue Lys-122 coordinates substrate.

Belongs to the ribose 5-phosphate isomerase family. In terms of assembly, homodimer.

The catalysed reaction is aldehydo-D-ribose 5-phosphate = D-ribulose 5-phosphate. It functions in the pathway carbohydrate degradation; pentose phosphate pathway; D-ribose 5-phosphate from D-ribulose 5-phosphate (non-oxidative stage): step 1/1. Catalyzes the reversible conversion of ribose-5-phosphate to ribulose 5-phosphate. This is Ribose-5-phosphate isomerase A from Lactococcus lactis subsp. cremoris (strain SK11).